The sequence spans 357 residues: 3-isopropylmalate dehydrogenase (357 aa).

Position 76-89 (76-89 (GPQWDTIDPALRPE)) interacts with NAD(+). The substrate site is built by Arg-96, Arg-106, Arg-134, and Asp-224. Mg(2+) contacts are provided by Asp-224, Asp-248, and Asp-252. Residue 282–294 (GSAPDIAGKGIAN) participates in NAD(+) binding.

Belongs to the isocitrate and isopropylmalate dehydrogenases family. LeuB type 1 subfamily. As to quaternary structure, homodimer. Requires Mg(2+) as cofactor. It depends on Mn(2+) as a cofactor.

It localises to the cytoplasm. It carries out the reaction (2R,3S)-3-isopropylmalate + NAD(+) = 4-methyl-2-oxopentanoate + CO2 + NADH. It participates in amino-acid biosynthesis; L-leucine biosynthesis; L-leucine from 3-methyl-2-oxobutanoate: step 3/4. Its function is as follows. Catalyzes the oxidation of 3-carboxy-2-hydroxy-4-methylpentanoate (3-isopropylmalate) to 3-carboxy-4-methyl-2-oxopentanoate. The product decarboxylates to 4-methyl-2 oxopentanoate. The protein is 3-isopropylmalate dehydrogenase of Xanthomonas axonopodis pv. citri (strain 306).